The following is a 54-amino-acid chain: Large ribosomal subunit protein bL33 (54 aa).

Belongs to the bacterial ribosomal protein bL33 family.

The chain is Large ribosomal subunit protein bL33 from Corynebacterium efficiens (strain DSM 44549 / YS-314 / AJ 12310 / JCM 11189 / NBRC 100395).